Consider the following 194-residue polypeptide: Probable nicotinate-nucleotide adenylyltransferase (194 aa).

Belongs to the NadD family.

The catalysed reaction is nicotinate beta-D-ribonucleotide + ATP + H(+) = deamido-NAD(+) + diphosphate. It participates in cofactor biosynthesis; NAD(+) biosynthesis; deamido-NAD(+) from nicotinate D-ribonucleotide: step 1/1. Catalyzes the reversible adenylation of nicotinate mononucleotide (NaMN) to nicotinic acid adenine dinucleotide (NaAD). This is Probable nicotinate-nucleotide adenylyltransferase from Chlorobium luteolum (strain DSM 273 / BCRC 81028 / 2530) (Pelodictyon luteolum).